A 265-amino-acid chain; its full sequence is Inositol-1-monophosphatase (265 aa).

Mg(2+) contacts are provided by E69, D87, I89, and D90. E69 lines the substrate pocket. Substrate is bound by residues 89-92 (IDGT), R185, and D214. Mg(2+) is bound at residue D214.

It belongs to the inositol monophosphatase superfamily. It depends on Mg(2+) as a cofactor.

The enzyme catalyses a myo-inositol phosphate + H2O = myo-inositol + phosphate. The catalysed reaction is a ribonucleoside 5'-phosphate + H2O = a ribonucleoside + phosphate. Its function is as follows. Hydrolyzes myo-inositol monophosphate. Catalyzes the dephosphorylation of GMP and IMP. The sequence is that of Inositol-1-monophosphatase from Bacillus subtilis (strain 168).